We begin with the raw amino-acid sequence, 248 residues long: ATP synthase subunit a (248 aa).

Helical transmembrane passes span 34 to 54 (TNVT…LVAG), 91 to 111 (YFPY…LGLI), 121 to 141 (IAVT…IGFV), 147 to 167 (FLSL…LAVI), 197 to 217 (FAGF…VMAI), and 220 to 240 (LEVL…CVYL).

This sequence belongs to the ATPase A chain family. In terms of assembly, F-type ATPases have 2 components, CF(1) - the catalytic core - and CF(0) - the membrane proton channel. CF(1) has five subunits: alpha(3), beta(3), gamma(1), delta(1), epsilon(1). CF(0) has four main subunits: a, b, b' and c.

Its subcellular location is the cell inner membrane. Key component of the proton channel; it plays a direct role in the translocation of protons across the membrane. In Dinoroseobacter shibae (strain DSM 16493 / NCIMB 14021 / DFL 12), this protein is ATP synthase subunit a.